Consider the following 150-residue polypeptide: Avidin-related protein 3 (150 aa).

Positions 1 to 24 (MVHTTSPLLLLLLLSLALVAPSLS) are cleaved as a signal peptide. The Avidin-like domain occupies 26–147 (RKCSLTGKWT…GYNNFTRQRT (122 aa)). Cysteines 28 and 105 form a disulfide. Biotin-binding residues include asparagine 36, serine 40, tyrosine 57, threonine 59, and aspartate 63. An N-linked (GlcNAc...) asparagine glycan is attached at asparagine 93. The biotin site is built by serine 95, serine 99, and asparagine 140. Asparagine 141 carries an N-linked (GlcNAc...) asparagine glycan.

The protein belongs to the avidin/streptavidin family. In terms of assembly, homotetramer. Glycosylated.

Its subcellular location is the secreted. Forms a strong non-covalent specific complex with biotin. This chain is Avidin-related protein 3 (AVR3), found in Gallus gallus (Chicken).